Here is a 244-residue protein sequence, read N- to C-terminus: ATP synthase subunit a (244 aa).

5 helical membrane passes run 17 to 37 (LTNILMITVASVIVLLIAILT), 75 to 95 (FLALGVTLLMYIFVSNMLGLP), 112 to 132 (DPAITLTLAVMVVALTHYYGV), 170 to 190 (LYGNIFAGEILLGLLAGLATS), and 221 to 241 (GAIQAFIFTMLTMVYMSHKIS).

It belongs to the ATPase A chain family. F-type ATPases have 2 components, CF(1) - the catalytic core - and CF(0) - the membrane proton channel. CF(1) has five subunits: alpha(3), beta(3), gamma(1), delta(1), epsilon(1). CF(0) has three main subunits: a(1), b(2) and c(9-12). The alpha and beta chains form an alternating ring which encloses part of the gamma chain. CF(1) is attached to CF(0) by a central stalk formed by the gamma and epsilon chains, while a peripheral stalk is formed by the delta and b chains. The F(1)F(0) complex interacts with SpoIIIJ and YqjG; YqgA is found in the same complex.

It is found in the cell membrane. Functionally, key component of the proton channel; it plays a direct role in the translocation of protons across the membrane. The chain is ATP synthase subunit a from Bacillus subtilis (strain 168).